The chain runs to 312 residues: MVENQKKKKIEEIERCPECGSTNLIRDYEHGELVCGECGAVIEDSYIDQGPEWRAFDSEQNESRARAGSPMTFTIHDKGLSTDISWKNKDSYGRSIPTRNRAQLYRLRKWQKRIKVSNAAERNLSQALQELERMAFNLSIPNDVRETAAVIYRKAVKQNMIRGRSIEGVVAGALYAACRITNVPRTLGEIASVTRVKKKEIGRTYRIMSRYLKLNIMPSKAEDYISRFCSKLKLSMDTRNKALEILRDAENVGLTSGKGPTGVAAAAIYIASLITGERRTQRAVAEVAGVTEVTIRNRYKELTEKLKLNVEQ.

Residues 12–43 (EIERCPECGSTNLIRDYEHGELVCGECGAVIE) form a TFIIB-type zinc finger. Positions 16, 19, 35, and 38 each coordinate Zn(2+). Tandem repeats lie at residues 129–212 (QELE…SRYL) and 223–304 (DYIS…ELTE).

It belongs to the TFIIB family.

Stabilizes TBP binding to an archaeal box-A promoter. Also responsible for recruiting RNA polymerase II to the pre-initiation complex (DNA-TBP-TFIIB). This chain is Transcription initiation factor IIB 1, found in Thermoplasma volcanium (strain ATCC 51530 / DSM 4299 / JCM 9571 / NBRC 15438 / GSS1).